A 177-amino-acid chain; its full sequence is Large ribosomal subunit protein uL5 (177 aa).

The protein belongs to the universal ribosomal protein uL5 family. As to quaternary structure, part of the 50S ribosomal subunit; contacts the 5S rRNA and probably tRNA. Forms a bridge to the 30S subunit in the 70S ribosome.

Functionally, this is one of the proteins that bind and probably mediate the attachment of the 5S RNA into the large ribosomal subunit, where it forms part of the central protuberance. In the 70S ribosome it contacts protein S13 of the 30S subunit (bridge B1b), connecting the 2 subunits; this bridge is implicated in subunit movement. May contact the P site tRNA; the 5S rRNA and some of its associated proteins might help stabilize positioning of ribosome-bound tRNAs. In Sulfurisphaera tokodaii (strain DSM 16993 / JCM 10545 / NBRC 100140 / 7) (Sulfolobus tokodaii), this protein is Large ribosomal subunit protein uL5.